The chain runs to 256 residues: MARGKKTQETGSSKRRSKVQEEEEHVEGSEEEVEEPEQKSSKRGSRKTTNSTSNKKKSVKKVESDDDDEDDLSELDVVVEDDNPVETSDNDEVATTPQQEKSSRSRKNRGDHESHDDNSDNEEQGDRGNRREHKPRPKVDPNTPIGKLATDQILQFLQERGEESFNPQLKHGARQLLNQLLGKYNGQRYGSKRGGPPRGSFGQRGGFNSRGRGMPPRMRQGDTRDTRDTRDTRLRFNTTQSNRRELNDQSDDLYND.

Disordered stretches follow at residues 1–171 (MARG…QLKH) and 185–256 (NGQR…LYND). Positions 14–39 (KRRSKVQEEEEHVEGSEEEVEEPEQK) form a coiled coil. Composition is skewed to acidic residues over residues 21–35 (EEEE…EVEE) and 64–92 (SDDD…DNDE). Residues 108–129 (NRGDHESHDDNSDNEEQGDRGN) show a composition bias toward basic and acidic residues. The span at 192–205 (KRGGPPRGSFGQRG) shows a compositional bias: gly residues. A compositionally biased stretch (basic and acidic residues) spans 219–234 (RQGDTRDTRDTRDTRL).

This is an uncharacterized protein from Acanthamoeba polyphaga (Amoeba).